Reading from the N-terminus, the 174-residue chain is Shikimate kinase 2 (174 aa).

Position 12 to 17 (12 to 17 (GCGKTT)) interacts with ATP. Mg(2+)-binding residues include T16 and D32. Residues D34, R58, and G79 each contribute to the substrate site. An LID domain region spans residues 112–126 (QAAPEEDLRPTLTGK). R120 provides a ligand contact to ATP. Position 139 (R139) interacts with substrate.

Belongs to the shikimate kinase family. AroL subfamily. As to quaternary structure, monomer. It depends on Mg(2+) as a cofactor.

Its subcellular location is the cytoplasm. It catalyses the reaction shikimate + ATP = 3-phosphoshikimate + ADP + H(+). The protein operates within metabolic intermediate biosynthesis; chorismate biosynthesis; chorismate from D-erythrose 4-phosphate and phosphoenolpyruvate: step 5/7. Its function is as follows. Catalyzes the specific phosphorylation of the 3-hydroxyl group of shikimic acid using ATP as a cosubstrate. This Escherichia coli O7:K1 (strain IAI39 / ExPEC) protein is Shikimate kinase 2.